The primary structure comprises 132 residues: UPF0299 membrane protein Ent638_2744 (132 aa).

The next 4 helical transmembrane spans lie at 8–28, 31–51, 63–83, and 93–113; these read VWQY…GIFI, LLPI…LLLA, GCFV…VGVM, and FGPI…VVSW.

Belongs to the UPF0299 family.

It is found in the cell inner membrane. This is UPF0299 membrane protein Ent638_2744 from Enterobacter sp. (strain 638).